The sequence spans 696 residues: Transcriptional activator of proteases prtT (696 aa).

A disordered region spans residues 106–126 (DVADGSGRPESSTSGDTIRPK). The segment at residues 136–165 (CNTCRKLKTRCDLDPRGHACRRCLSLRIEC) is a DNA-binding region (zn(2)-C6 fungal-type).

This sequence belongs to the prtT family.

It localises to the nucleus. In terms of biological role, transcription factor required for protein utilization and degradation. Regulates transcription of major secreted proteases including a serine alkaline protease (alk1), a metalloprotease (mep), an aspergillopepsin (pep1), a sedolisin (sed2) and two dipeptidyl-peptidases (dppIV and dppV). However, it is not a virulence determinant in leukopenic mice. This Aspergillus fumigatus (strain ATCC MYA-4609 / CBS 101355 / FGSC A1100 / Af293) (Neosartorya fumigata) protein is Transcriptional activator of proteases prtT (prtT).